The primary structure comprises 288 residues: Short chain aldehyde dehydrogenase 1 (288 aa).

NAD(+) is bound by residues 26 to 28 (SGI), aspartate 47, 72 to 73 (DV), and 99 to 101 (NAG). The active-site Proton donor is the serine 153. 2 residues coordinate substrate: serine 153 and tyrosine 166. NAD(+) contacts are provided by tyrosine 166, lysine 170, and threonine 201. Tyrosine 166 functions as the Proton acceptor in the catalytic mechanism. Lysine 170 serves as the catalytic Proton donor/acceptor.

Belongs to the short-chain dehydrogenases/reductases (SDR) family. As to quaternary structure, homodimer. Expressed in mature seeds.

The enzyme catalyses 4,5,8-trihydroxycasbene + 2 NAD(+) = jolkinol C + 2 NADH + 2 H(+). It carries out the reaction a secondary alcohol + NAD(+) = a ketone + NADH + H(+). The catalysed reaction is a primary alcohol + NAD(+) = an aldehyde + NADH + H(+). Its pathway is secondary metabolite biosynthesis; terpenoid biosynthesis. Functionally, involved in the biosynthesis of macrocyclic lathyrane type diterpenoids (also called Euphorbia factors) natural products, including the cyclization route from casbene to jolkinol C, a precursor for ingenol mebutate that is used to treat actinic keratosis, a precancerous skin condition. Catalyzes the conversion of 4,5,8-trihydroxycasbene into jolkinol C in presence of NAD. Also mediates the formation of casbene dione derivative and 4-ketocasbene from 4-hydroxy-8-ketocasbene and 4-hydroxycasbene, respectively. Together with CYP71D445, triggers the biosynthesis of 8-ketocasbene from 8-hydroxycasbene. This chain is Short chain aldehyde dehydrogenase 1, found in Euphorbia lathyris (Caper spurge).